A 374-amino-acid polypeptide reads, in one-letter code: D-amino-acid oxidase 3 (374 aa).

A signal peptide spans 1 to 19 (MVKYDAIILGSGVLGLSIA). Residues Ser11, Leu14, Lys34, Asp35, Ala46, Ser47, and Gly51 each contribute to the FAD site. The N-linked (GlcNAc...) asparagine glycan is linked to Asn180. The cysteines at positions 214 and 271 are disulfide-linked. Positions 229, 246, and 296 each coordinate (R)-lactate. Anthranilate is bound by residues Tyr229, Tyr246, and Arg296. Arg296, Gly342, Gly345, Tyr346, and Gln347 together coordinate FAD. Residues 372–374 (AKL) carry the Microbody targeting signal motif.

This sequence belongs to the DAMOX/DASOX family. Requires FAD as cofactor.

It localises to the peroxisome matrix. It catalyses the reaction a D-alpha-amino acid + O2 + H2O = a 2-oxocarboxylate + H2O2 + NH4(+). In terms of biological role, catalyzes the oxidative deamination of D-amino acids with broad substrate specificity. Enables the organism to utilize D-amino acids as a source of nutrients. Enables the organism to utilize D-asparate and D-glutamate as a nitrogen source and may also contribute to utlization of D-tryptophan, D-tyrosine and D-asparagine as a nitrogen source. Protects the organism from the toxicity of D-amino acids, including from D-glutamate. May play a role in its interaction with the host. This is D-amino-acid oxidase 3 from Cryptococcus deuterogattii (strain R265) (Cryptococcus gattii VGII (strain R265)).